The sequence spans 59 residues: MYGIVMFVNRKEELEFLERKWNENKANLIILYGRRRVGKTMLIKKFLENKKIKRASIFC.

An ATP-binding site is contributed by 33-40 (GRRRVGKT).

This is an uncharacterized protein from Methanocaldococcus jannaschii (strain ATCC 43067 / DSM 2661 / JAL-1 / JCM 10045 / NBRC 100440) (Methanococcus jannaschii).